Consider the following 119-residue polypeptide: Beta-2-microglobulin (119 aa).

The signal sequence occupies residues 1–20 (MARSVVAALLVLLSLSGLEA). In terms of domain architecture, Ig-like C1-type spans 25–114 (PKIQVYSRHP…VTFPTPKTVK (90 aa)). A disulfide bridge links Cys-45 with Cys-100.

Belongs to the beta-2-microglobulin family. As to quaternary structure, heterodimer of an alpha chain and a beta chain. Beta-2-microglobulin is the beta-chain of major histocompatibility complex class I molecules.

The protein localises to the secreted. Functionally, component of the class I major histocompatibility complex (MHC). Involved in the presentation of peptide antigens to the immune system. This chain is Beta-2-microglobulin (B2M), found in Saimiri boliviensis boliviensis (Bolivian squirrel monkey).